The chain runs to 290 residues: uncharacterized protein (290 aa).

Disordered regions lie at residues 89–157 (CSEN…EELS), 172–217 (MANT…MESS), and 261–290 (TANTPPTVVHVSKPSSETSVSIPPSSAVKK). Basic and acidic residues-rich tracts occupy residues 106-124 (DFSKTTVDETIKEKSEKQP) and 142-152 (KTEKLVSKEPS). Composition is skewed to polar residues over residues 172-183 (MANTSSSANRTG) and 193-202 (KPTTAVQAST). Composition is skewed to low complexity over residues 207–217 (MSSAESAMESS) and 274–290 (PSSETSVSIPPSSAVKK).

This is an uncharacterized protein from Caenorhabditis elegans.